Reading from the N-terminus, the 1126-residue chain is [F-actin]-monooxygenase mical2 (1126 aa).

Residues Gly-2–Gln-494 form a monooxygenase domain region. FAD contacts are provided by residues Cys-97, Glu-116–Arg-118, Arg-123–Asn-125, Phe-183, Tyr-299, and Asp-399. Residues Asp-516–Glu-619 form the Calponin-homology (CH) domain. Positions Arg-659–Thr-680 match the Nuclear localization signal motif. Disordered stretches follow at residues Ala-748–Ser-830 and Pro-892–Ser-935. Residues Val-792–Ala-803 show a composition bias toward pro residues. The segment covering Pro-805–Arg-824 has biased composition (basic and acidic residues). The span at Ser-918–Ser-932 shows a compositional bias: low complexity. Residues Asp-1001 to Lys-1063 enclose the LIM zinc-binding domain. Zn(2+) is bound by residues Cys-1003, Cys-1006, His-1024, Cys-1027, Cys-1030, Cys-1033, Cys-1053, and His-1056.

Belongs to the Mical family. The cofactor is FAD.

Its subcellular location is the nucleus. It is found in the cytoplasm. The enzyme catalyses L-methionyl-[F-actin] + NADPH + O2 + H(+) = L-methionyl-(R)-S-oxide-[F-actin] + NADP(+) + H2O. In terms of biological role, nuclear monooxygenase that promotes depolymerization of F-actin by mediating oxidation of specific methionine residues on actin and regulates the srf signaling. Acts by modifying nuclear actin subunits through the addition of oxygen to form methionine-sulfoxide, leading to promote actin filament severing and prevent repolymerization. Acts as a key regulator of the srf signaling pathway elicited by nerve growth factor and serum: mediates oxidation and subsequent depolymerization of nuclear actin, leading to increase mkl1/mrtf-a presence in the nucleus and promote srf:mkl1/mrtf-a-dependent gene transcription. The chain is [F-actin]-monooxygenase mical2 from Xenopus tropicalis (Western clawed frog).